The following is a 369-amino-acid chain: Anhydro-N-acetylmuramic acid kinase (369 aa).

12–19 (GTSLDGVD) lines the ATP pocket.

It belongs to the anhydro-N-acetylmuramic acid kinase family.

The enzyme catalyses 1,6-anhydro-N-acetyl-beta-muramate + ATP + H2O = N-acetyl-D-muramate 6-phosphate + ADP + H(+). The protein operates within amino-sugar metabolism; 1,6-anhydro-N-acetylmuramate degradation. It functions in the pathway cell wall biogenesis; peptidoglycan recycling. Catalyzes the specific phosphorylation of 1,6-anhydro-N-acetylmuramic acid (anhMurNAc) with the simultaneous cleavage of the 1,6-anhydro ring, generating MurNAc-6-P. Is required for the utilization of anhMurNAc either imported from the medium or derived from its own cell wall murein, and thus plays a role in cell wall recycling. The sequence is that of Anhydro-N-acetylmuramic acid kinase from Escherichia coli O45:K1 (strain S88 / ExPEC).